The sequence spans 26 residues: Toxin b subunit alpha (26 aa).

Toxin b is a heterodimer composed of toxin alpha and toxin beta. As to expression, expressed by the venom gland.

The protein resides in the secreted. Its function is as follows. Binds to sodium channels (Nav) and affects the channel activation process. The chain is Toxin b subunit alpha from Androctonus crassicauda (Arabian fat-tailed scorpion).